The following is a 142-amino-acid chain: Large ribosomal subunit protein uL13 (142 aa).

The protein belongs to the universal ribosomal protein uL13 family. In terms of assembly, part of the 50S ribosomal subunit.

Its function is as follows. This protein is one of the early assembly proteins of the 50S ribosomal subunit, although it is not seen to bind rRNA by itself. It is important during the early stages of 50S assembly. The sequence is that of Large ribosomal subunit protein uL13 from Thioalkalivibrio sulfidiphilus (strain HL-EbGR7).